A 291-amino-acid polypeptide reads, in one-letter code: 4-hydroxy-tetrahydrodipicolinate synthase (291 aa).

Pyruvate is bound at residue Thr-45. Tyr-133 acts as the Proton donor/acceptor in catalysis. The Schiff-base intermediate with substrate role is filled by Lys-161. A pyruvate-binding site is contributed by Ile-203.

Belongs to the DapA family. Homotetramer; dimer of dimers.

It is found in the cytoplasm. The catalysed reaction is L-aspartate 4-semialdehyde + pyruvate = (2S,4S)-4-hydroxy-2,3,4,5-tetrahydrodipicolinate + H2O + H(+). It functions in the pathway amino-acid biosynthesis; L-lysine biosynthesis via DAP pathway; (S)-tetrahydrodipicolinate from L-aspartate: step 3/4. In terms of biological role, catalyzes the condensation of (S)-aspartate-beta-semialdehyde [(S)-ASA] and pyruvate to 4-hydroxy-tetrahydrodipicolinate (HTPA). This Neisseria meningitidis serogroup C (strain 053442) protein is 4-hydroxy-tetrahydrodipicolinate synthase.